We begin with the raw amino-acid sequence, 100 residues long: Aspartyl/glutamyl-tRNA(Asn/Gln) amidotransferase subunit C (100 aa).

The protein belongs to the GatC family. Heterotrimer of A, B and C subunits.

The enzyme catalyses L-glutamyl-tRNA(Gln) + L-glutamine + ATP + H2O = L-glutaminyl-tRNA(Gln) + L-glutamate + ADP + phosphate + H(+). It catalyses the reaction L-aspartyl-tRNA(Asn) + L-glutamine + ATP + H2O = L-asparaginyl-tRNA(Asn) + L-glutamate + ADP + phosphate + 2 H(+). Functionally, allows the formation of correctly charged Asn-tRNA(Asn) or Gln-tRNA(Gln) through the transamidation of misacylated Asp-tRNA(Asn) or Glu-tRNA(Gln) in organisms which lack either or both of asparaginyl-tRNA or glutaminyl-tRNA synthetases. The reaction takes place in the presence of glutamine and ATP through an activated phospho-Asp-tRNA(Asn) or phospho-Glu-tRNA(Gln). This is Aspartyl/glutamyl-tRNA(Asn/Gln) amidotransferase subunit C from Streptococcus suis (strain 98HAH33).